The chain runs to 312 residues: ECF RNA polymerase sigma factor SigJ (312 aa).

The interval F6–R65 is sigma-70 factor domain-2. A Polymerase core binding motif is present at residues D29 to Q32. The interval M107–A155 is sigma-70 factor domain-4. Residues F131–S150 constitute a DNA-binding region (H-T-H motif). Residues G293–N312 are disordered.

The protein belongs to the sigma-70 factor family. ECF subfamily. In terms of assembly, interacts transiently with the RNA polymerase catalytic core formed by RpoA, RpoB, RpoC and RpoZ (2 alpha, 1 beta, 1 beta' and 1 omega subunit) to form the RNA polymerase holoenzyme that can initiate transcription.

Functionally, sigma factors are initiation factors that promote the attachment of RNA polymerase to specific initiation sites and are then released. Extracytoplasmic function (ECF) sigma factors are held in an inactive form by an anti-sigma factor until released, although no anti-sigma factor is known for this protein. Regulates the promoter of SigI, may not be autoregulated. The chain is ECF RNA polymerase sigma factor SigJ (sigJ) from Mycobacterium tuberculosis (strain ATCC 25618 / H37Rv).